The sequence spans 703 residues: MKITLSSYEMELVRKKLAREPNEAEWLTIDALWSEHCSYKSSKVFLRSFPSEGEKVLMGIEDWQDAGALDVGDGWAIVLKLESHNHPSAIDPFNGAATGVGGIIRDIISKGAKPIALLDMIRVGNLSNPRNKWLLKNIIAGIGFYGNSIGVPVVGGELDFDDSYNDNPLVDVAGVGIVRKDKIVPSVVKEPGLKIVIVGLTGLDGLGGASFASRKLSGEDEIGAVQIADPFAGKIVLDVTLEIADKVEAIKDLGGGGLVVGVTEMANGLGAIVNLDKVPLRVKDLKPEEILVSETQERMLFAVKEENVNEVCKAFEYYDYPCAVIGEFVKEPYIKFLYGGKEIVSLPSDLLLSPPRFIWEIKKPKLIKSDKKPEVGLEESIRAILSRIISKEWAYSQFDYEVGTSTVLKPGEADSALISLPNGKLLALKGDANPDLCAEDSYECGKSIVAEAYRNLASVGAIGIGVVDHLQFGDPKKPEVYYSFVEAIRGIAEASKFFSTPIVGGKVSFYNENKEGKAIKPTPLIVMAGLIKDKFLRNKVVEDSYITLIGFTRDEMRGSLFGKIFGNYGEVPKARLNEDYLASQLVVNLINDEKIFFAKDINKGGLIASLFSILVKGMGVEIETSSIPSDTDDWIPKLYSENGGRFIVLTNDPEYIIRKSKGIHISVIGKITKDQGIIKIDNKEINVNKEIDNYYNYLYEVMS.

Residue His-36 is part of the active site. 2 residues coordinate ATP: Tyr-39 and Lys-80. Glu-82 contacts Mg(2+). Residues 83–86 (SHNH) and Arg-105 contribute to the substrate site. The active-site Proton acceptor is His-84. A Mg(2+)-binding site is contributed by Asp-106. Gln-226 is a substrate binding site. Asp-252 contacts Mg(2+). Residue 294-296 (ETQ) participates in substrate binding. ATP contacts are provided by Asp-468 and Gly-505. Ser-508 serves as a coordination point for substrate.

Belongs to the FGAMS family. Monomer. Part of the FGAM synthase complex composed of 1 PurL, 1 PurQ and 2 PurS subunits.

It localises to the cytoplasm. The enzyme catalyses N(2)-formyl-N(1)-(5-phospho-beta-D-ribosyl)glycinamide + L-glutamine + ATP + H2O = 2-formamido-N(1)-(5-O-phospho-beta-D-ribosyl)acetamidine + L-glutamate + ADP + phosphate + H(+). The protein operates within purine metabolism; IMP biosynthesis via de novo pathway; 5-amino-1-(5-phospho-D-ribosyl)imidazole from N(2)-formyl-N(1)-(5-phospho-D-ribosyl)glycinamide: step 1/2. In terms of biological role, part of the phosphoribosylformylglycinamidine synthase complex involved in the purines biosynthetic pathway. Catalyzes the ATP-dependent conversion of formylglycinamide ribonucleotide (FGAR) and glutamine to yield formylglycinamidine ribonucleotide (FGAM) and glutamate. The FGAM synthase complex is composed of three subunits. PurQ produces an ammonia molecule by converting glutamine to glutamate. PurL transfers the ammonia molecule to FGAR to form FGAM in an ATP-dependent manner. PurS interacts with PurQ and PurL and is thought to assist in the transfer of the ammonia molecule from PurQ to PurL. This chain is Phosphoribosylformylglycinamidine synthase subunit PurL, found in Sulfurisphaera tokodaii (strain DSM 16993 / JCM 10545 / NBRC 100140 / 7) (Sulfolobus tokodaii).